A 208-amino-acid chain; its full sequence is MKKFIFCFLCFWTLNIFAASKGYPNKLNRCKITRNIFNDYEPKVFEPTNNLLRKTGQISRFYGEKVIIKGIVLDQNCVPVADAKVYLWQAGSGGKYPYEPLKTRVDKRRFTGKKDSSFTGSGTATTNNKGEYYFVSMLPYKSVGNLKSVNIRVEHADLKTLETRLDLSNKNICSNECGEINPALIEPQQHLRSYCFDLVLQGATLKRY.

It belongs to the intradiol ring-cleavage dioxygenase family.

This chain is Putative dioxygenase RBE_0329, found in Rickettsia bellii (strain RML369-C).